Here is a 92-residue protein sequence, read N- to C-terminus: Putative transcription elongation factor S-II-like protein 81R (92 aa).

Residues 51-91 form a TFIIS-type zinc finger; that stretch reads GTVKCPGCGSRRVHALQRQTRSADEPMTLFAMCSECGKRWT. Positions 55, 58, 83, and 86 each coordinate Zn(2+).

The polypeptide is Putative transcription elongation factor S-II-like protein 81R (Dryophytes versicolor (chameleon treefrog)).